Consider the following 377-residue polypeptide: MSTPALLVLADGSVFHGTSIGYEGSTSGEVVFNTSMTGYQEILTDPSYCKQIVTLTYPHIGNTGTNAEDEESRSVYAAGLIIRDLPLLHSNFRASESLHDYLVRNKTVAIADIDTRRLTTLLREKGAQGGAILTGADATIEKAQELIAAFGSMVGKDLAKEVSCTETYEWTEGEWALGKGFVTPDEQPYHVVAYDFGVKTNILRMLASRGCRLTVVPAQTSAQDVLALNPDGVFLSNGPGDPEPCTYAIEAVQKLMESGKPIFGICLGHQLISLAIGAKTLKMRFSHHGANHPVQDLDSGKVVITSQNHGFAVDADTLPANARITHKSLFDNTLQGIELTDKPVFCFQGHPEASPGPQDVGYLFDKFIGNMKAAKRA.

Residues 1-186 form a CPSase region; the sequence is MSTPALLVLA…LGKGFVTPDE (186 aa). Residues Ser47, Gly238, and Gly240 each coordinate L-glutamine. The region spanning 190 to 377 is the Glutamine amidotransferase type-1 domain; it reads HVVAYDFGVK…IGNMKAAKRA (188 aa). Residue Cys266 is the Nucleophile of the active site. The L-glutamine site is built by Leu267, Gln270, Asn308, Gly310, and Phe311. Catalysis depends on residues His350 and Glu352.

The protein belongs to the CarA family. In terms of assembly, composed of two chains; the small (or glutamine) chain promotes the hydrolysis of glutamine to ammonia, which is used by the large (or ammonia) chain to synthesize carbamoyl phosphate. Tetramer of heterodimers (alpha,beta)4.

The catalysed reaction is hydrogencarbonate + L-glutamine + 2 ATP + H2O = carbamoyl phosphate + L-glutamate + 2 ADP + phosphate + 2 H(+). It carries out the reaction L-glutamine + H2O = L-glutamate + NH4(+). Its pathway is amino-acid biosynthesis; L-arginine biosynthesis; carbamoyl phosphate from bicarbonate: step 1/1. It functions in the pathway pyrimidine metabolism; UMP biosynthesis via de novo pathway; (S)-dihydroorotate from bicarbonate: step 1/3. Its function is as follows. Small subunit of the glutamine-dependent carbamoyl phosphate synthetase (CPSase). CPSase catalyzes the formation of carbamoyl phosphate from the ammonia moiety of glutamine, carbonate, and phosphate donated by ATP, constituting the first step of 2 biosynthetic pathways, one leading to arginine and/or urea and the other to pyrimidine nucleotides. The small subunit (glutamine amidotransferase) binds and cleaves glutamine to supply the large subunit with the substrate ammonia. In Neisseria meningitidis serogroup A / serotype 4A (strain DSM 15465 / Z2491), this protein is Carbamoyl phosphate synthase small chain.